A 148-amino-acid chain; its full sequence is Endoribonuclease YbeY (148 aa).

Positions 102, 106, and 112 each coordinate Zn(2+).

The protein belongs to the endoribonuclease YbeY family. It depends on Zn(2+) as a cofactor.

The protein resides in the cytoplasm. Functionally, single strand-specific metallo-endoribonuclease involved in late-stage 70S ribosome quality control and in maturation of the 3' terminus of the 16S rRNA. In Phytoplasma mali (strain AT), this protein is Endoribonuclease YbeY.